The chain runs to 600 residues: ATP-dependent lipid A-core flippase (600 aa).

5 consecutive transmembrane segments (helical) span residues 28–48, 80–100, 182–202, 267–287, and 295–315; these read IMAVLGLITYGAVDAAFIAFI, IMLMAPIAVILMFSLRGVANF, WKLSLCILVIGPIMGVVISVV, ISQPLIMVIGSFALAFVLYAA, and DLTAGTFAAILGAMLAMLQPI. Residues 28 to 327 form the ABC transmembrane type-1 domain; sequence IMAVLGLITY…LTRVNAEFQR (300 aa). Residues 359–596 form the ABC transporter domain; that stretch reads LAFDNVTFAY…AGIYANLYQM (238 aa). 393–400 lines the ATP pocket; that stretch reads GRSGSGKS.

The protein belongs to the ABC transporter superfamily. Lipid exporter (TC 3.A.1.106) family. As to quaternary structure, homodimer.

It localises to the cell inner membrane. It catalyses the reaction ATP + H2O + lipid A-core oligosaccharideSide 1 = ADP + phosphate + lipid A-core oligosaccharideSide 2.. Functionally, involved in lipopolysaccharide (LPS) biosynthesis. Translocates lipid A-core from the inner to the outer leaflet of the inner membrane. Transmembrane domains (TMD) form a pore in the inner membrane and the ATP-binding domain (NBD) is responsible for energy generation. The sequence is that of ATP-dependent lipid A-core flippase from Shewanella frigidimarina (strain NCIMB 400).